The sequence spans 338 residues: Oligopeptide transport ATP-binding protein OppD (338 aa).

The 251-residue stretch at 7–257 (LEAKQVSVAF…PKHPYTRSLL (251 aa)) folds into the ABC transporter domain. 43–50 (GESGSGKS) lines the ATP pocket.

Belongs to the ABC transporter superfamily. The complex is composed of two ATP-binding proteins (OppD and OppF), two transmembrane proteins (OppB and OppC) and a solute-binding protein (OppA).

It localises to the cell membrane. It carries out the reaction a [peptide](out) + ATP + H2O = a [peptide](in) + ADP + phosphate + H(+). Part of the ABC transporter complex OppABCDF involved in the uptake of oligopeptides. Probably responsible for energy coupling to the transport system. Essential for uptake of peptides larger than three amino acids and for growth in milk. The sequence is that of Oligopeptide transport ATP-binding protein OppD (oppD) from Lactococcus lactis subsp. lactis (strain IL1403) (Streptococcus lactis).